A 300-amino-acid polypeptide reads, in one-letter code: Protoheme IX farnesyltransferase (300 aa).

The next 9 membrane-spanning stretches (helical) occupy residues 24–44, 48–68, 94–114, 118–138, 146–166, 172–192, 217–237, 239–259, and 278–298; these read VTQL…PGMV, VLLG…AINC, LQIL…LYTF, LTMW…TLLL, IVIG…AVTG, AWIL…VLAL, LHIL…FISG, SGAV…AYAW, and IVYL…RPVI.

This sequence belongs to the UbiA prenyltransferase family. Protoheme IX farnesyltransferase subfamily.

It localises to the cell inner membrane. It catalyses the reaction heme b + (2E,6E)-farnesyl diphosphate + H2O = Fe(II)-heme o + diphosphate. It functions in the pathway porphyrin-containing compound metabolism; heme O biosynthesis; heme O from protoheme: step 1/1. In terms of biological role, converts heme B (protoheme IX) to heme O by substitution of the vinyl group on carbon 2 of heme B porphyrin ring with a hydroxyethyl farnesyl side group. This Burkholderia pseudomallei (strain 1106a) protein is Protoheme IX farnesyltransferase.